Consider the following 181-residue polypeptide: MSRIGKNPIAIPAGVTVEVNNSIVTVKGKLGQLTQNYTNNVTVKVEEGQVIVERAADSKQERAQHGLYRALINNMVAGVSTGFTKELELVGVGYRASNQGQKLDLALGFSHNIVLEIASEVTLETISEKGKNPIVKLTSFDKQLLGQVAAKIRGFRKPEPYKGKGVKFVGEVLRRKAGKSA.

This sequence belongs to the universal ribosomal protein uL6 family. As to quaternary structure, part of the 50S ribosomal subunit.

Functionally, this protein binds to the 23S rRNA, and is important in its secondary structure. It is located near the subunit interface in the base of the L7/L12 stalk, and near the tRNA binding site of the peptidyltransferase center. The sequence is that of Large ribosomal subunit protein uL6 from Flavobacterium psychrophilum (strain ATCC 49511 / DSM 21280 / CIP 103535 / JIP02/86).